The chain runs to 51 residues: uncharacterized protein (51 aa).

The segment at 1–24 (MGGRFSGRVGIEKGGHPPSAADHS) is disordered.

This is an uncharacterized protein from Escherichia coli.